The primary structure comprises 476 residues: Glycogen synthase (476 aa).

Lys15 contributes to the ADP-alpha-D-glucose binding site.

The protein belongs to the glycosyltransferase 1 family. Bacterial/plant glycogen synthase subfamily.

The catalysed reaction is [(1-&gt;4)-alpha-D-glucosyl](n) + ADP-alpha-D-glucose = [(1-&gt;4)-alpha-D-glucosyl](n+1) + ADP + H(+). It participates in glycan biosynthesis; glycogen biosynthesis. Synthesizes alpha-1,4-glucan chains using ADP-glucose. The protein is Glycogen synthase of Leptospira biflexa serovar Patoc (strain Patoc 1 / Ames).